Reading from the N-terminus, the 114-residue chain is Secretoglobin family 2B member 2 (114 aa).

Positions 1-23 are cleaved as a signal peptide; it reads MKGTLLLLALLVTGELGFQRTEA.

It belongs to the secretoglobin family. As to expression, expressed in lacrimal gland.

It localises to the secreted. This Mus musculus (Mouse) protein is Secretoglobin family 2B member 2 (Scgb2b2).